The chain runs to 385 residues: 1-deoxy-D-xylulose 5-phosphate reductoisomerase (385 aa).

NADPH-binding residues include Thr-10, Gly-11, Ser-12, Ile-13, Gly-36, Asn-38, and Asn-122. Lys-123 provides a ligand contact to 1-deoxy-D-xylulose 5-phosphate. Glu-124 contacts NADPH. Asp-148 provides a ligand contact to Mn(2+). Positions 149, 150, 174, and 197 each coordinate 1-deoxy-D-xylulose 5-phosphate. A Mn(2+)-binding site is contributed by Glu-150. Gly-203 provides a ligand contact to NADPH. Residues Ser-210, Asn-215, Lys-216, and Glu-219 each coordinate 1-deoxy-D-xylulose 5-phosphate. Glu-219 provides a ligand contact to Mn(2+).

It belongs to the DXR family. It depends on Mg(2+) as a cofactor. The cofactor is Mn(2+).

It carries out the reaction 2-C-methyl-D-erythritol 4-phosphate + NADP(+) = 1-deoxy-D-xylulose 5-phosphate + NADPH + H(+). The protein operates within isoprenoid biosynthesis; isopentenyl diphosphate biosynthesis via DXP pathway; isopentenyl diphosphate from 1-deoxy-D-xylulose 5-phosphate: step 1/6. In terms of biological role, catalyzes the NADPH-dependent rearrangement and reduction of 1-deoxy-D-xylulose-5-phosphate (DXP) to 2-C-methyl-D-erythritol 4-phosphate (MEP). The chain is 1-deoxy-D-xylulose 5-phosphate reductoisomerase from Geobacter sp. (strain M21).